The following is a 315-amino-acid chain: MIKLGIVMDPIAHINIKKDTSFAMLLEAQRRGYELHYMEMADLYLINGEARARTRTLSVEQNYDKWYEFGSEQEIKLADLDVILMRKDPPFDTEFIYATYILERAEEEGTLIVNKPQSLRDCNEKLYTAWFADLTPETLVTRNKAQLKAFWEKHGDIIMKPLDGMGGASIFRVKEGDPNIGVIAETLTELGNRYCMAQNYLPAIKDGDKRVLVVDGEPVPYCLARIPQGGETRGNLAAGGRGEPRPLSESDWEIARRVGPTLKAKGLIFVGLDIIGDRLTEINVTSPTCVREIEAEYPISITGMLMDAIEARLAK.

One can recognise an ATP-grasp domain in the interval 125-310; that stretch reads KLYTAWFADL…ITGMLMDAIE (186 aa). 151-207 is an ATP binding site; the sequence is WEKHGDIIMKPLDGMGGASIFRVKEGDPNIGVIAETLTELGNRYCMAQNYLPAIKDG. Residues E281 and N283 each coordinate Mg(2+).

This sequence belongs to the prokaryotic GSH synthase family. Mg(2+) is required as a cofactor. Requires Mn(2+) as cofactor.

It catalyses the reaction gamma-L-glutamyl-L-cysteine + glycine + ATP = glutathione + ADP + phosphate + H(+). It participates in sulfur metabolism; glutathione biosynthesis; glutathione from L-cysteine and L-glutamate: step 2/2. This Salmonella typhimurium (strain LT2 / SGSC1412 / ATCC 700720) protein is Glutathione synthetase.